Consider the following 512-residue polypeptide: Gasdermin-E (512 aa).

The tract at residues 1–56 (MFAKATRNFLKEVDAGGDLISVSHLNDSDKLQLLSLVTKKKRYWCWQRPKYQILSA) is membrane targeting domain. At Cys-45 the chain carries S-(2-succinyl)cysteine. Lys-120 participates in a covalent cross-link: Glycyl lysine isopeptide (Lys-Gly) (interchain with G-Cter in ubiquitin). Residues Cys-156, Cys-168, and Cys-180 each carry the S-(2-succinyl)cysteine modification. Lys-189 is covalently cross-linked (Glycyl lysine isopeptide (Lys-Gly) (interchain with G-Cter in ubiquitin)). Cys-235, Cys-411, and Cys-420 each carry S-(2-succinyl)cysteine.

It belongs to the gasdermin family. As to quaternary structure, homooligomer; homooligomeric ring-shaped pore complex containing 27-28 subunits when inserted in the membrane. Cleavage at Asp-270 by CASP3 (mature and uncleaved precursor forms) or granzyme B (GZMB) relieves autoinhibition and is sufficient to initiate pyroptosis. Post-translationally, succination by the Krebs cycle intermediate fumarate, which leads to S-(2-succinyl)cysteine residues, inhibits processing by caspases, and ability to initiate pyroptosis. Succination modification is catalyzed by a non-enzymatic reaction caused by an accumulation of fumarate. In terms of processing, ubiquitinated on Lys-120 and Lys-189 via 'Lys-48'-linked polyubiquitin chains, leading to proteasomal degradation. Deubiquitinated by USP48, leading to increased stability. Palmitoylated. As to expression, expressed in spleen, kidney, large and small intestine, testicle, stomach and by CD4(+)CD(8+) T cells in thymus. Expressed by macrophages.

Its subcellular location is the cell membrane. It is found in the cytoplasm. The protein resides in the cytosol. Its activity is regulated as follows. The full-length protein before cleavage is inactive: intramolecular interactions between N- and C-terminal domains mediate autoinhibition in the absence of activation signal. The intrinsic pyroptosis-inducing activity is carried by the released N-terminal moiety (Gasdermin-E, N-terminal) following cleavage by CASP3 or granzyme B (GZMB). Activated by NLRP1 in the absence of GSDMD expression: NLRP1 cleaves and activates CASP8, promoting downstream activation of CASP3 and subsequent activation of GSDME. Its function is as follows. Precursor of a pore-forming protein that converts non-inflammatory apoptosis to pyroptosis. This form constitutes the precursor of the pore-forming protein: upon cleavage, the released N-terminal moiety (Gasdermin-E, N-terminal) binds to membranes and forms pores, triggering pyroptosis. Pore-forming protein produced by cleavage by CASP3 or granzyme B (GZMB), which converts non-inflammatory apoptosis to pyroptosis or promotes granzyme-mediated pyroptosis, respectively. After cleavage, moves to the plasma membrane, homooligomerizes within the membrane and forms pores of 10-15 nanometers (nm) of inner diameter, allowing the release of mature interleukins (IL1B and IL16) and triggering pyroptosis. Binds to inner leaflet lipids, bisphosphorylated phosphatidylinositols, such as phosphatidylinositol (4,5)-bisphosphate. Cleavage by CASP3 switches CASP3-mediated apoptosis induced by TNF or danger signals, such as chemotherapy drugs, to pyroptosis. Mediates secondary necrosis downstream of the mitochondrial apoptotic pathway and CASP3 activation as well as in response to viral agents. Exhibits bactericidal activity. Cleavage by GZMB promotes tumor suppressor activity by triggering robust anti-tumor immunity. Suppresses tumors by mediating granzyme-mediated pyroptosis in target cells of natural killer (NK) cells: cleavage by granzyme B (GZMB), delivered to target cells from NK-cells, triggers pyroptosis of tumor cells and tumor suppression. May play a role in the p53/TP53-regulated cellular response to DNA damage. The sequence is that of Gasdermin-E from Mus musculus (Mouse).